Here is a 406-residue protein sequence, read N- to C-terminus: Dihydroorotase, mitochondrial (406 aa).

A mitochondrion-targeting transit peptide spans 1 to 41 (MQTAATSTFFANPHVKHLPGPFLRPSPHYGALVHLPSFRNK). Residues His-69, His-71, Lys-155, His-193, His-231, and Asp-305 each coordinate Zn(2+). The residue at position 155 (Lys-155) is an N6-carboxylysine.

Belongs to the metallo-dependent hydrolases superfamily. DHOase family. Class II DHOase subfamily. Zn(2+) is required as a cofactor.

Its subcellular location is the mitochondrion. It catalyses the reaction (S)-dihydroorotate + H2O = N-carbamoyl-L-aspartate + H(+). Its pathway is pyrimidine metabolism; UMP biosynthesis via de novo pathway; (S)-dihydroorotate from bicarbonate: step 3/3. The polypeptide is Dihydroorotase, mitochondrial (PYRC) (Oryza sativa subsp. japonica (Rice)).